The chain runs to 170 residues: Adenine phosphoribosyltransferase (170 aa).

The protein belongs to the purine/pyrimidine phosphoribosyltransferase family. As to quaternary structure, homodimer.

It localises to the cytoplasm. It catalyses the reaction AMP + diphosphate = 5-phospho-alpha-D-ribose 1-diphosphate + adenine. The protein operates within purine metabolism; AMP biosynthesis via salvage pathway; AMP from adenine: step 1/1. Catalyzes a salvage reaction resulting in the formation of AMP, that is energically less costly than de novo synthesis. This is Adenine phosphoribosyltransferase from Enterococcus faecalis (strain ATCC 700802 / V583).